The following is a 314-amino-acid chain: Methionyl-tRNA formyltransferase (314 aa).

S110–P113 provides a ligand contact to (6S)-5,6,7,8-tetrahydrofolate.

Belongs to the Fmt family.

It carries out the reaction L-methionyl-tRNA(fMet) + (6R)-10-formyltetrahydrofolate = N-formyl-L-methionyl-tRNA(fMet) + (6S)-5,6,7,8-tetrahydrofolate + H(+). Attaches a formyl group to the free amino group of methionyl-tRNA(fMet). The formyl group appears to play a dual role in the initiator identity of N-formylmethionyl-tRNA by promoting its recognition by IF2 and preventing the misappropriation of this tRNA by the elongation apparatus. The protein is Methionyl-tRNA formyltransferase of Bacillus anthracis (strain A0248).